The following is a 746-amino-acid chain: Histone-lysine N-methyltransferase EZH2 (746 aa).

The interaction with DNMT1, DNMT3A and DNMT3B stretch occupies residues 1–340; that stretch reads MGQTGKKSEK…AKEFAAALTA (340 aa). Residue Ser21 is modified to Phosphoserine; by PKB/AKT1. The segment at 39–68 is interaction with EED; it reads KSMFSSNRQKILERTEILNQEWKQRRIQPV. A glycan (O-linked (GlcNAc) serine) is linked at Ser75. Ser76 carries the phosphoserine modification. Positions 180-222 are disordered; sequence QYNDDDDDDDGDDPEEREEKQKDLEDHRDDKESRPPRKFPSDK. The span at 182–195 shows a compositional bias: acidic residues; sequence NDDDDDDDGDDPEE. Residues 196–222 are compositionally biased toward basic and acidic residues; that stretch reads REEKQKDLEDHRDDKESRPPRKFPSDK. An interaction with CDYL region spans residues 329-522; the sequence is EGAKEFAAAL…SSNHVYNYQP (194 aa). Thr339 bears the Phosphothreonine mark. The segment at 340 to 426 is disordered; sequence AERIKTPPKR…PIKMKPNIEP (87 aa). At Thr345 the chain carries Phosphothreonine; by CDK1 and CDK2. Over residues 345 to 357 the composition is skewed to basic residues; it reads TPPKRPGGRRRGR. Phosphoserine occurs at positions 363 and 366. Thr367 bears the Phosphothreonine mark. Residues 374-385 are compositionally biased toward basic and acidic residues; sequence ESKDTDSDREAG. A Phosphothreonine modification is found at Thr487. The CXC domain occupies 503-605; sequence CRKIQLKKDG…SKNVSCKNCS (103 aa). One can recognise an SET domain in the interval 612–727; that stretch reads KHLLLAPSDV…TGEELFFDYR (116 aa). Residue Lys634 forms a Glycyl lysine isopeptide (Lys-Gly) (interchain with G-Cter in SUMO2) linkage.

This sequence belongs to the class V-like SAM-binding methyltransferase superfamily. Histone-lysine methyltransferase family. EZ subfamily. As to quaternary structure, component of the PRC2/EED-EZH2 complex, which includes EED, EZH2, SUZ12, RBBP4 and RBBP7 and possibly AEBP2. The minimum components required for methyltransferase activity of the PRC2/EED-EZH2 complex are EED, EZH2 and SUZ12. The PRC2 complex may also interact with DNMT1, DNMT3A, DNMT3B and PHF1 via the EZH2 subunit and with SIRT1 via the SUZ12 subunit. Interacts with HDAC1 and HDAC2. Binds ATRX via the SET domain. Interacts with PRAME. Interacts with CDYL. Interacts with BMAL1, CLOCK and CRY1. Interacts with DNMT3L; the interaction is direct. Interacts with EZHIP; the interaction blocks EZH2 methyltransferase activity. Interacts with ZNF263; recruited to the SIX3 promoter along with other proteins involved in chromatin modification and transcriptional corepression where it contributes to transcriptional repression. Interacts with ARMC12. Interacts with ZMYND8; the interaction is dependent on the presence of chromatin. Interacts with DDX18; this interaction inhibits the PRC2 complex. Post-translationally, phosphorylated by AKT1. Phosphorylation by AKT1 reduces methyltransferase activity. Phosphorylation at Thr-345 by CDK1 and CDK2 promotes maintenance of H3K27me3 levels at EZH2-target loci, thus leading to epigenetic gene silencing. Sumoylated. In terms of processing, glycosylated: O-GlcNAcylation at Ser-75 by OGT increases stability of EZH2 and facilitates the formation of H3K27me3 by the PRC2/EED-EZH2 complex.

The protein localises to the nucleus. The enzyme catalyses L-lysyl(27)-[histone H3] + 3 S-adenosyl-L-methionine = N(6),N(6),N(6)-trimethyl-L-lysyl(27)-[histone H3] + 3 S-adenosyl-L-homocysteine + 3 H(+). In terms of biological role, polycomb group (PcG) protein. Catalytic subunit of the PRC2/EED-EZH2 complex, which methylates 'Lys-9' (H3K9me) and 'Lys-27' (H3K27me) of histone H3, leading to transcriptional repression of the affected target gene. Able to mono-, di- and trimethylate 'Lys-27' of histone H3 to form H3K27me1, H3K27me2 and H3K27me3, respectively. Displays a preference for substrates with less methylation, loses activity when progressively more methyl groups are incorporated into H3K27, H3K27me0 &gt; H3K27me1 &gt; H3K27me2. Compared to EZH1-containing complexes, it is more abundant in embryonic stem cells and plays a major role in forming H3K27me3, which is required for embryonic stem cell identity and proper differentiation. The PRC2/EED-EZH2 complex may also serve as a recruiting platform for DNA methyltransferases, thereby linking two epigenetic repression systems. EZH2 can also methylate non-histone proteins such as the transcription factor GATA4 and the nuclear receptor RORA. Regulates the circadian clock via histone methylation at the promoter of the circadian genes. Essential for the CRY1/2-mediated repression of the CLOCK-BMAL1 transcriptional activation of PER1/2. Involved in the di and trimethylation of 'Lys-27' of histone H3 on PER1/2 promoters which is necessary for the CRY1/2 proteins to inhibit transcription. The chain is Histone-lysine N-methyltransferase EZH2 (EZH2) from Macaca fascicularis (Crab-eating macaque).